We begin with the raw amino-acid sequence, 350 residues long: Magnesium-chelatase 38 kDa subunit (350 aa).

52 to 59 (GDRGTGKS) contacts ATP.

The protein belongs to the Mg-chelatase subunits D/I family.

The enzyme catalyses protoporphyrin IX + Mg(2+) + ATP + H2O = Mg-protoporphyrin IX + ADP + phosphate + 3 H(+). It participates in porphyrin-containing compound metabolism; bacteriochlorophyll biosynthesis. In terms of biological role, involved in bacteriochlorophyll biosynthesis; introduces a magnesium ion into protoporphyrin IX to yield Mg-protoporphyrin IX. The sequence is that of Magnesium-chelatase 38 kDa subunit (bchI) from Rhodobacter capsulatus (strain ATCC BAA-309 / NBRC 16581 / SB1003).